Reading from the N-terminus, the 361-residue chain is Probable dual-specificity RNA methyltransferase RlmN (361 aa).

Catalysis depends on Glu-91, which acts as the Proton acceptor. The Radical SAM core domain occupies 97-335; the sequence is QHYGLSVCVT…CVVRQEHGTD (239 aa). Cys-104 and Cys-340 form a disulfide bridge. [4Fe-4S] cluster-binding residues include Cys-111, Cys-115, and Cys-118. Residues 163-164, Ser-195, 218-220, and Asn-296 each bind S-adenosyl-L-methionine; these read GE and SLH. Cys-340 serves as the catalytic S-methylcysteine intermediate.

The protein belongs to the radical SAM superfamily. RlmN family. [4Fe-4S] cluster is required as a cofactor.

The protein resides in the cytoplasm. It carries out the reaction adenosine(2503) in 23S rRNA + 2 reduced [2Fe-2S]-[ferredoxin] + 2 S-adenosyl-L-methionine = 2-methyladenosine(2503) in 23S rRNA + 5'-deoxyadenosine + L-methionine + 2 oxidized [2Fe-2S]-[ferredoxin] + S-adenosyl-L-homocysteine. The enzyme catalyses adenosine(37) in tRNA + 2 reduced [2Fe-2S]-[ferredoxin] + 2 S-adenosyl-L-methionine = 2-methyladenosine(37) in tRNA + 5'-deoxyadenosine + L-methionine + 2 oxidized [2Fe-2S]-[ferredoxin] + S-adenosyl-L-homocysteine. Its function is as follows. Specifically methylates position 2 of adenine 2503 in 23S rRNA and position 2 of adenine 37 in tRNAs. The protein is Probable dual-specificity RNA methyltransferase RlmN of Streptococcus mutans serotype c (strain ATCC 700610 / UA159).